The sequence spans 336 residues: Large ribosomal subunit protein mL39 (336 aa).

One can recognise a TGS domain in the interval 60-126 (EKIEVKHVGK…TKSCEIKFLT (67 aa)). Lys-123 carries the post-translational modification N6-acetyllysine.

The protein belongs to the mitochondrion-specific ribosomal protein mL39 family. In terms of assembly, component of the mitochondrial ribosome large subunit (39S) which comprises a 16S rRNA and about 50 distinct proteins.

Its subcellular location is the mitochondrion. The protein is Large ribosomal subunit protein mL39 (Mrpl39) of Mus musculus (Mouse).